Reading from the N-terminus, the 357-residue chain is Glucose-6-phosphatase catalytic subunit 1 (357 aa).

Residues 1–28 lie on the Lumenal side of the membrane; the sequence is MEKGMDVLHDFGIQSTHYLQVNYQDSQD. A helical transmembrane segment spans residues 29-49; the sequence is WFILVSVIADLRNAFYVLFPI. At 50-60 the chain is on the cytoplasmic side; the sequence is WFHLREAVGIK. The chain crosses the membrane as a helical span at residues 61–81; sequence LLWVAVIGDWLNLVFKWILFG. Topologically, residues 82-117 are lumenal; sequence QRPYWWVMDTDYYSNTSVPLIKQFPVTCETGPGSPS. Substrate is bound at residue R83. N96 carries N-linked (GlcNAc...) asparagine glycosylation. A helical transmembrane segment spans residues 118-138; that stretch reads GHAMGTAGVYYVMVTSTLSIF. The active-site Proton donor is the H119. Residues 139-147 are Cytoplasmic-facing; that stretch reads RGRKRPTYR. Residues 148 to 168 form a helical membrane-spanning segment; sequence FRCLNILLWLGFWAVQLNVCL. Topologically, residues 169-170 are lumenal; it reads SR. Substrate is bound at residue R170. A helical transmembrane segment spans residues 171 to 191; sequence IYLAAHFPHQVVAGVLSGIAV. The Nucleophile role is filled by H176. The Cytoplasmic portion of the chain corresponds to 192 to 209; that stretch reads AETFRHIQSIYNASLKKY. The helical transmembrane segment at 210–230 threads the bilayer; the sequence is FLITFFLFSFAIGFYLLLKGL. The Lumenal portion of the chain corresponds to 231–254; sequence GVDLLWTLEKARRWCERPEWVHID. A helical membrane pass occupies residues 255–275; sequence TTPFASLLKNVGTLFGLGVTL. Over 276 to 291 the chain is Cytoplasmic; it reads NSSMYRESCKGKLSKW. A helical transmembrane segment spans residues 292-312; it reads FPFRLSCIVVSLILLHLFDSL. The Lumenal segment spans residues 313–320; the sequence is KPPSQTEL. Residues 321–341 traverse the membrane as a helical segment; that stretch reads IFYTLSFCKSAAVPLASVSLI. The Cytoplasmic portion of the chain corresponds to 342-357; it reads PYCLARVFDQPDKKSL. A Prevents secretion from ER motif is present at residues 354–357; the sequence is KKSL.

Belongs to the glucose-6-phosphatase family.

The protein resides in the endoplasmic reticulum membrane. It carries out the reaction D-glucose 6-phosphate + H2O = D-glucose + phosphate. The protein operates within carbohydrate biosynthesis; gluconeogenesis. In terms of biological role, hydrolyzes glucose-6-phosphate to glucose in the endoplasmic reticulum. Forms with the glucose-6-phosphate transporter (SLC37A4/G6PT) the complex responsible for glucose production in the terminal step of glycogenolysis and gluconeogenesis. Hence, it is the key enzyme in homeostatic regulation of blood glucose levels. This Canis lupus familiaris (Dog) protein is Glucose-6-phosphatase catalytic subunit 1 (G6PC1).